A 538-amino-acid chain; its full sequence is Putative outer membrane porin BglH (538 aa).

The signal sequence occupies residues 1-25; that stretch reads MFRRNIITSAILLMAPLAFSAQSLA.

It belongs to the porin LamB (TC 1.B.3) family.

The protein resides in the cell outer membrane. Its function is as follows. May be a sugar porin with a broad carbohydrate specificity. The sequence is that of Putative outer membrane porin BglH (bglH) from Escherichia coli O6:H1 (strain CFT073 / ATCC 700928 / UPEC).